The chain runs to 631 residues: MKTYVSNEYDVIVVGAGHAGCEAALASARMGEKTLLLTISLDMVAFMPCNPSVGGPAKGTVVREIDALGGEMGKNIDKTYIQMRMLNTGKGPAVRALRAQADKWDYHEEMKRTIENTPNLTLRQAVVDDLIVEDGECRGVVTNTGARYRAKSVVLTTGTAARGRIFIGELNYSSGPNNTIPAIKLSESLERLGFKLRRFKTGTPPRVNRHTIDYSKTEEEPGDKEPRHFSFTSRDEDYLTDQTSCWMTYTNPKTHEIINENLDRSPMFSGDIVGVGPRYCPSIETKVVRFADKDRHQIFLEPEGRKTEEIYVGDFSTSMPEEVQLEMLHTVAGLEKVEMMRPGYAIEYDVVDPWQLTHTLETKRIKHLYMAGQMNGTSGYEEAAGQGLIAGINAALSAEGKPAFTLGRDEAYIGVLIDDLVTKGTEEPYRLLTSRAEYRLLLRHDNADLRLTEKGHDLGLIDDDRYAEFLAKKELIQEDLDRLGEITVHPTIAVNEYLAGLGQTDLNGGVKADVFLRRPRVTVEDVERLTGQKLAGDRYVKEQVEIDIKYAGYIKKQEIQVARLRRQEAKKIPKDIDYDQIEGLATEAREKLAKIRPETLAQAERISGVNPADLAILSVYVQNGKYAKVQK.

15–20 is an FAD binding site; the sequence is GAGHAG. The interval 214 to 233 is disordered; sequence YSKTEEEPGDKEPRHFSFTS. Residue 276–290 participates in NAD(+) binding; sequence GPRYCPSIETKVVRF.

The protein belongs to the MnmG family. Homodimer. Heterotetramer of two MnmE and two MnmG subunits. Requires FAD as cofactor.

It is found in the cytoplasm. Functionally, NAD-binding protein involved in the addition of a carboxymethylaminomethyl (cmnm) group at the wobble position (U34) of certain tRNAs, forming tRNA-cmnm(5)s(2)U34. The sequence is that of tRNA uridine 5-carboxymethylaminomethyl modification enzyme MnmG from Lactobacillus delbrueckii subsp. bulgaricus (strain ATCC 11842 / DSM 20081 / BCRC 10696 / JCM 1002 / NBRC 13953 / NCIMB 11778 / NCTC 12712 / WDCM 00102 / Lb 14).